Here is a 246-residue protein sequence, read N- to C-terminus: Phosducin (246 aa).

Acidic residues predominate over residues 1–14; it reads MEEAASQSLEEDFE. The disordered stretch occupies residues 1–70; the sequence is MEEAASQSLE…DKDSKERMSR (70 aa). The Phosducin domain maps to 1–246; that stretch reads MEEAASQSLE…QTNTEDEDIE (246 aa). The span at 58-69 shows a compositional bias: basic and acidic residues; that stretch reads SRDDKDSKERMS. A Phosphoserine; by PKA modification is found at S73. The segment at 111–246 is thioredoxin fold; the sequence is YGFVYELETG…QTNTEDEDIE (136 aa).

Belongs to the phosducin family. Interacts with CRX. Forms a complex with the beta and gamma subunits of the GTP-binding protein, transducin. In terms of processing, light-induced changes in cyclic nucleotide levels modulate the phosphorylation of this protein by cAMP kinase.

Its subcellular location is the cytoplasm. It is found in the cytosol. It localises to the nucleus. The protein resides in the cell projection. The protein localises to the cilium. Its subcellular location is the photoreceptor outer segment. It is found in the photoreceptor inner segment. In terms of biological role, inhibits the transcriptional activation activity of the cone-rod homeobox CRX. May participate in the regulation of visual phototransduction or in the integration of photoreceptor metabolism. The polypeptide is Phosducin (Pdc) (Rattus norvegicus (Rat)).